We begin with the raw amino-acid sequence, 247 residues long: DNA repair protein RecO (247 aa).

It belongs to the RecO family.

Its function is as follows. Involved in DNA repair and RecF pathway recombination. The chain is DNA repair protein RecO from Alkalilimnicola ehrlichii (strain ATCC BAA-1101 / DSM 17681 / MLHE-1).